A 300-amino-acid polypeptide reads, in one-letter code: UDP-N-acetylenolpyruvoylglucosamine reductase (300 aa).

The region spanning 27–216 (RVGGPADVIF…TERREKTQPI (190 aa)) is the FAD-binding PCMH-type domain. Residue arginine 172 is part of the active site. The Proton donor role is filled by serine 223. Glutamate 293 is an active-site residue.

This sequence belongs to the MurB family. The cofactor is FAD.

It localises to the cytoplasm. It catalyses the reaction UDP-N-acetyl-alpha-D-muramate + NADP(+) = UDP-N-acetyl-3-O-(1-carboxyvinyl)-alpha-D-glucosamine + NADPH + H(+). The protein operates within cell wall biogenesis; peptidoglycan biosynthesis. Functionally, cell wall formation. The protein is UDP-N-acetylenolpyruvoylglucosamine reductase of Phenylobacterium zucineum (strain HLK1).